Reading from the N-terminus, the 816-residue chain is H(+)/Cl(-) exchange transporter 5 (816 aa).

The Cytoplasmic portion of the chain corresponds to 1 to 124 (MAMWQGAMDN…WALIHSVSDA (124 aa)). 2 helical membrane-spanning segments follow: residues 125–162 (FSGWLLMLLIGLFSGSLAGLIDISAHWMTDLKEGICTG) and 208–231 (VNYFMYVLWALLFAFLAVSLVKVF). A Selectivity filter part_1 motif is present at residues 237–241 (GSGIP). Residue serine 238 coordinates chloride. Positions 240-247 (IPEIKTIL) form an intramembrane region, helical. Helical transmembrane passes span 256 to 275 (LGKWTLVIKTITLVLAVSSG) and 281 to 300 (EGPLVHVACCCGNILCHRFN). The Selectivity filter part_2 signature appears at 279 to 283 (GKEGP). 2 intramembrane regions (helical) span residues 312–324 (VLSAAAAAGVSVA) and 328–336 (PIGGVLFSL). The next 5 helical transmembrane spans lie at 348 to 366 (LWRSFFAALVAAFTLRSIN), 389 to 414 (LVPFILLGIFGGLWGALFIRTNIAWC), 422 to 442 (LGKYPVIEVLIVTAITAILAF), 498 to 518 (MWQLALALILKIVITIFTFGM), and 523 to 542 (GLFIPSMAVGAIAGRLLGVG). The Selectivity filter part_3 signature appears at 523–527 (GLFIP). Position 525 (phenylalanine 525) interacts with chloride. Residues 570–584 (GLYAMVGAAACLGGV) constitute an intramembrane region (helical). Positions 585–587 (TRM) form an intramembrane region, note=Loop between two helices. The segment at residues 588–599 (TVSLVVIMFELT) is an intramembrane region (helical). The note=Loop between two helices intramembrane region spans 600–604 (GGLEY). Residues 605-622 (IVPLMAAAMTSKWVADAL) form a helical membrane-spanning segment. Residues 623 to 816 (GREGIYDAHI…NQDPDSILFN (194 aa)) are Cytoplasmic-facing. Tyrosine 628 contributes to the chloride binding site. 2 consecutive CBS domains span residues 656 to 720 (MKPR…ARKK) and 752 to 812 (ILDL…DPDS). Residues threonine 666, 687-689 (YSG), and 794-797 (TKKD) contribute to the ATP site.

It belongs to the chloride channel (TC 2.A.49) family. ClC-5/CLCN5 subfamily. As to quaternary structure, interacts with NEDD4 and NEDD4L. Ubiquitinated by NEDD4L in the presence of albumin; which promotes endocytosis and proteasomal degradation.

Its subcellular location is the golgi apparatus membrane. The protein localises to the endosome membrane. It is found in the cell membrane. The enzyme catalyses 2 chloride(in) + H(+)(out) = 2 chloride(out) + H(+)(in). Its function is as follows. Proton-coupled chloride transporter. Functions as antiport system and exchanges chloride ions against protons. Important for normal acidification of the endosome lumen. May play an important role in renal tubular function. The CLC channel family contains both chloride channels and proton-coupled anion transporters that exchange chloride or another anion for protons. The absence of conserved gating glutamate residues is typical for family members that function as channels. The polypeptide is H(+)/Cl(-) exchange transporter 5 (CLCN5) (Oryctolagus cuniculus (Rabbit)).